Consider the following 476-residue polypeptide: Angiotensinogen (476 aa).

An N-terminal signal peptide occupies residues 1–24; sequence MAPAGVSLRATILCLVAWAGLAAG. N-linked (GlcNAc...) asparagine glycans are attached at residues Asn38, Asn161, Asn295, and Asn319. A disulfide bond links Cys42 and Cys162.

This sequence belongs to the serpin family. In response to low blood pressure, the enzyme renin/REN cleaves angiotensinogen to produce angiotensin-1. Angiotensin-1 is a substrate of ACE (angiotensin converting enzyme) that removes a dipeptide to yield the physiologically active peptide angiotensin-2. Angiotensin-1 and angiotensin-2 can be further processed to generate angiotensin-3, angiotensin-4. Angiotensin 1-9 is cleaved from angiotensin-1 by ACE2 and can be further processed by ACE to produce angiotensin 1-7, angiotensin 1-5 and angiotensin 1-4. Angiotensin 1-7 has also been proposed to be cleaved from angiotensin-2 by ACE2 or from angiotensin-1 by MME (neprilysin). In terms of processing, the disulfide bond is labile. Angiotensinogen is present in the circulation in a near 40:60 ratio with the oxidized disulfide-bonded form, which preferentially interacts with receptor-bound renin.

Its subcellular location is the secreted. Its function is as follows. Essential component of the renin-angiotensin system (RAS), a potent regulator of blood pressure, body fluid and electrolyte homeostasis. Acts directly on vascular smooth muscle as a potent vasoconstrictor, affects cardiac contractility and heart rate through its action on the sympathetic nervous system, and alters renal sodium and water absorption through its ability to stimulate the zona glomerulosa cells of the adrenal cortex to synthesize and secrete aldosterone. Acts by binding to angiotensin receptors AGTR1 and AGTR2. Also binds the DEAR/FBXW7-AS1 receptor. Functionally, stimulates aldosterone release. In terms of biological role, is a ligand for the G-protein coupled receptor MAS1. Has vasodilator and antidiuretic effects. Has an antithrombotic effect that involves MAS1-mediated release of nitric oxide from platelets. The sequence is that of Angiotensinogen (AGT) from Pan troglodytes (Chimpanzee).